Here is a 202-residue protein sequence, read N- to C-terminus: Large ribosomal subunit protein uL4 (202 aa).

Residues 42–52 (GTKAQKSRSQV) are compositionally biased toward polar residues. The disordered stretch occupies residues 42 to 70 (GTKAQKSRSQVSGTTKKSKKQKGGGARHG).

Belongs to the universal ribosomal protein uL4 family. Part of the 50S ribosomal subunit.

One of the primary rRNA binding proteins, this protein initially binds near the 5'-end of the 23S rRNA. It is important during the early stages of 50S assembly. It makes multiple contacts with different domains of the 23S rRNA in the assembled 50S subunit and ribosome. Its function is as follows. Forms part of the polypeptide exit tunnel. This Xylella fastidiosa (strain Temecula1 / ATCC 700964) protein is Large ribosomal subunit protein uL4.